Reading from the N-terminus, the 466-residue chain is Benzoate transport protein (466 aa).

Residues 1-22 (MSREINVNQMIDDSKLTPFHWR) lie on the Cytoplasmic side of the membrane. The helical transmembrane segment at 23–43 (VIILSTLIIIFDGYDLVIYGV) threads the bilayer. Topologically, residues 44 to 60 (ALPLLMKEWAIDPVTAG) are periplasmic. A helical transmembrane segment spans residues 61–81 (FIGSIALFGMMFGALIFGTIA). At 82 to 93 (DKLEHLGVSRKK) the chain is on the cytoplasmic side. The chain crosses the membrane as a helical span at residues 94 to 114 (VIAVCIILFSLCTVLCGFSET). The Periplasmic portion of the chain corresponds to 115–119 (TTQFS). A helical membrane pass occupies residues 120 to 140 (IFRFLAGVGIGGVMPNVIALV). The Cytoplasmic segment spans residues 141–150 (SEYAPKKFKS). Residues 151 to 171 (FFVTLMFSGYAIGGMTAAFLG) traverse the membrane as a helical segment. Residues 172-181 (SILVPLYGWK) are Periplasmic-facing. Residues 182 to 202 (IMFMIAGIPLVLLLPLMKVLP) form a helical membrane-spanning segment. Residues 203–258 (ESIDYLVRKKKDETVRFIMTKMVPSYQYQPDHVFVLNSSNQNQAQAPVKMIFQEQR) are Cytoplasmic-facing. Residues 259–279 (AFSTMMFWCSIFMTLIMVYAL) traverse the membrane as a helical segment. Over 280–297 (GNWLPKLMIEAGYNLSKS) the chain is Periplasmic. The chain crosses the membrane as a helical span at residues 298–318 (LIFLFSLNVGGMIGSILGGYL). Residues 319–325 (ADRYNVK) are Cytoplasmic-facing. Residues 326–346 (FVTMGLLLLGAISLSLLSFQF) form a helical membrane-spanning segment. The Periplasmic segment spans residues 347-348 (SS). Residues 349 to 369 (VILYILIACAGAASIGAQIML) traverse the membrane as a helical segment. Residues 370–387 (LAYMAKFYAPNVRSTGIG) lie on the Cytoplasmic side of the membrane. Residues 388 to 408 (WGLGMGRVGAILGPILTGWLL) form a helical membrane-spanning segment. Residues 409–414 (SLQLPH) lie on the Periplasmic side of the membrane. The helical transmembrane segment at 415-435 (FYNFLALSIPAVLGIVTVFLI) threads the bilayer. Topologically, residues 436–466 (NDRRMYQPEPISPIANQNDTTTVKVNEAVSH) are cytoplasmic.

Belongs to the major facilitator superfamily. Aromatic acid:H(+) symporter (AAHS) (TC 2.A.1.15) family.

It is found in the cell inner membrane. Its function is as follows. Probable uptake of benzoate. This is Benzoate transport protein (benK) from Acinetobacter baylyi (strain ATCC 33305 / BD413 / ADP1).